A 121-amino-acid chain; its full sequence is Large ribosomal subunit protein uL14 (121 aa).

The protein belongs to the universal ribosomal protein uL14 family. As to quaternary structure, part of the 50S ribosomal subunit. Forms a cluster with proteins L3 and L19. In the 70S ribosome, L14 and L19 interact and together make contacts with the 16S rRNA in bridges B5 and B8.

Functionally, binds to 23S rRNA. Forms part of two intersubunit bridges in the 70S ribosome. The chain is Large ribosomal subunit protein uL14 from Phocaeicola vulgatus (strain ATCC 8482 / DSM 1447 / JCM 5826 / CCUG 4940 / NBRC 14291 / NCTC 11154) (Bacteroides vulgatus).